A 316-amino-acid chain; its full sequence is L-lactate dehydrogenase (316 aa).

NAD(+) is bound by residues Val15, Asp37, Lys42, Tyr68, and 82–83; that span reads GL. Residues Gln85, Arg91, and 123–126 each bind substrate; that span reads NPVD. NAD(+) contacts are provided by residues 121-123 and Thr146; that span reads ASN. Residue 151-154 participates in substrate binding; the sequence is DTSR. Residues Arg156 and His171 each coordinate beta-D-fructose 1,6-bisphosphate. His178 functions as the Proton acceptor in the catalytic mechanism. Residue Tyr222 is modified to Phosphotyrosine. Thr231 lines the substrate pocket.

Belongs to the LDH/MDH superfamily. LDH family. In terms of assembly, homotetramer.

It localises to the cytoplasm. The catalysed reaction is (S)-lactate + NAD(+) = pyruvate + NADH + H(+). It functions in the pathway fermentation; pyruvate fermentation to lactate; (S)-lactate from pyruvate: step 1/1. Its activity is regulated as follows. Allosterically activated by fructose 1,6-bisphosphate (FBP). In terms of biological role, catalyzes the conversion of lactate to pyruvate. This is L-lactate dehydrogenase from Borrelia garinii subsp. bavariensis (strain ATCC BAA-2496 / DSM 23469 / PBi) (Borreliella bavariensis).